The sequence spans 177 residues: ATP synthase subunit delta (177 aa).

The protein belongs to the ATPase delta chain family. F-type ATPases have 2 components, F(1) - the catalytic core - and F(0) - the membrane proton channel. F(1) has five subunits: alpha(3), beta(3), gamma(1), delta(1), epsilon(1). F(0) has three main subunits: a(1), b(2) and c(10-14). The alpha and beta chains form an alternating ring which encloses part of the gamma chain. F(1) is attached to F(0) by a central stalk formed by the gamma and epsilon chains, while a peripheral stalk is formed by the delta and b chains.

The protein resides in the cell inner membrane. In terms of biological role, f(1)F(0) ATP synthase produces ATP from ADP in the presence of a proton or sodium gradient. F-type ATPases consist of two structural domains, F(1) containing the extramembraneous catalytic core and F(0) containing the membrane proton channel, linked together by a central stalk and a peripheral stalk. During catalysis, ATP synthesis in the catalytic domain of F(1) is coupled via a rotary mechanism of the central stalk subunits to proton translocation. This protein is part of the stalk that links CF(0) to CF(1). It either transmits conformational changes from CF(0) to CF(1) or is implicated in proton conduction. In Pectobacterium atrosepticum (strain SCRI 1043 / ATCC BAA-672) (Erwinia carotovora subsp. atroseptica), this protein is ATP synthase subunit delta.